The chain runs to 414 residues: MWEDSLTVFCGIDWAERHHDVAIVDDTGTLLAKARITDDVAGYNKLLDLLAEHGDSSATPIPVAIETSHGLLVAALRTGSRKVFAINPLAAARYRDRHGVSRKKSDPGDALVLANILRTDMHAHRPLPADSELAQAITVLARAQQDAVWNRQQVANQVRSLLREYYPAALHAFQSKDGGLTRPDARVILTMAPTPAKAAKLTLAQLRAGLKRSGRTRAFNTEIERLRGIFRSEYARQLPAVEDAFGHQLLALLRQLDATCLAADDLAKAVEDAFREHADSEILLSFPGLGPLLGARVLAEIGDDRSRFTDARALKSYAGSAPITRASGRKHFVGRRFVKNNRLMNAGFLWAFAALQASPGANAHYRRRREHGDWHAAAQRHLLNRFLGQLHHCLQTRQHFDEQRAFAPLLQAAA.

The sequence is that of Mini-circle putative transposase for IS117 from Streptomyces coelicolor (strain ATCC BAA-471 / A3(2) / M145).